The chain runs to 237 residues: Uridylate kinase (237 aa).

ATP is bound at residue 12–15 (KLSG). An involved in allosteric activation by GTP region spans residues 20–25 (GEDGLG). Position 54 (Gly54) interacts with UMP. ATP is bound by residues Gly55 and Arg59. UMP is bound by residues Asp74 and 135-142 (TGNPFFTT). Thr162, Tyr168, and Asp171 together coordinate ATP.

This sequence belongs to the UMP kinase family. In terms of assembly, homohexamer.

The protein resides in the cytoplasm. The catalysed reaction is UMP + ATP = UDP + ADP. The protein operates within pyrimidine metabolism; CTP biosynthesis via de novo pathway; UDP from UMP (UMPK route): step 1/1. Allosterically activated by GTP. Inhibited by UTP. Its function is as follows. Catalyzes the reversible phosphorylation of UMP to UDP. The protein is Uridylate kinase of Haemophilus influenzae (strain 86-028NP).